The primary structure comprises 401 residues: tRNA(Met) cytidine acetate ligase (401 aa).

ATP-binding positions include Ile-7–His-20, Gly-102, Asn-164, and Arg-189.

The protein belongs to the TmcAL family.

The protein localises to the cytoplasm. The catalysed reaction is cytidine(34) in elongator tRNA(Met) + acetate + ATP = N(4)-acetylcytidine(34) in elongator tRNA(Met) + AMP + diphosphate. Functionally, catalyzes the formation of N(4)-acetylcytidine (ac(4)C) at the wobble position of elongator tRNA(Met), using acetate and ATP as substrates. First activates an acetate ion to form acetyladenylate (Ac-AMP) and then transfers the acetyl group to tRNA to form ac(4)C34. This Caldanaerobacter subterraneus subsp. tengcongensis (strain DSM 15242 / JCM 11007 / NBRC 100824 / MB4) (Thermoanaerobacter tengcongensis) protein is tRNA(Met) cytidine acetate ligase.